The following is a 203-amino-acid chain: ATP-dependent Clp protease proteolytic subunit (203 aa).

Residue serine 98 is the Nucleophile of the active site. The active site involves histidine 123.

Belongs to the peptidase S14 family. In terms of assembly, fourteen ClpP subunits assemble into 2 heptameric rings which stack back to back to give a disk-like structure with a central cavity, resembling the structure of eukaryotic proteasomes.

The protein localises to the cytoplasm. The catalysed reaction is Hydrolysis of proteins to small peptides in the presence of ATP and magnesium. alpha-casein is the usual test substrate. In the absence of ATP, only oligopeptides shorter than five residues are hydrolyzed (such as succinyl-Leu-Tyr-|-NHMec, and Leu-Tyr-Leu-|-Tyr-Trp, in which cleavage of the -Tyr-|-Leu- and -Tyr-|-Trp bonds also occurs).. Its function is as follows. Cleaves peptides in various proteins in a process that requires ATP hydrolysis. Has a chymotrypsin-like activity. Plays a major role in the degradation of misfolded proteins. The chain is ATP-dependent Clp protease proteolytic subunit from Desulfotalea psychrophila (strain LSv54 / DSM 12343).